A 390-amino-acid chain; its full sequence is Mannitol-1-phosphate 5-dehydrogenase (390 aa).

7 to 18 (AVHFGGGNIGRG) lines the NAD(+) pocket. Residue Lys216 is part of the active site.

This sequence belongs to the mannitol dehydrogenase family. In terms of assembly, monomer.

It carries out the reaction D-mannitol 1-phosphate + NAD(+) = beta-D-fructose 6-phosphate + NADH + H(+). Its function is as follows. Catalyzes the NAD(H)-dependent interconversion of D-fructose 6-phosphate and D-mannitol 1-phosphate in the mannitol metabolic pathway. Has a strong preference for NADH over NADPH. This is Mannitol-1-phosphate 5-dehydrogenase from Alternaria alternata (Alternaria rot fungus).